We begin with the raw amino-acid sequence, 355 residues long: 5-formaminoimidazole-4-carboxamide-1-(beta)-D-ribofuranosyl 5'-monophosphate synthetase (355 aa).

5-amino-1-(5-phospho-beta-D-ribosyl)imidazole-4-carboxamide contacts are provided by His-27 and Ser-94. The ATP-grasp domain maps to 101-332 (TESFAELAVP…YSDMIEENLS (232 aa)). Residues 144-195 (PEKI…TRYY) and Glu-225 each bind ATP. Asn-254 contributes to the 5-amino-1-(5-phospho-beta-D-ribosyl)imidazole-4-carboxamide binding site. Mg(2+) is bound by residues Glu-292 and Glu-305.

This sequence belongs to the phosphohexose mutase family. The cofactor is Mg(2+). Requires Mn(2+) as cofactor.

It catalyses the reaction 5-amino-1-(5-phospho-beta-D-ribosyl)imidazole-4-carboxamide + formate + ATP = 5-formamido-1-(5-phospho-D-ribosyl)imidazole-4-carboxamide + ADP + phosphate. It functions in the pathway purine metabolism; IMP biosynthesis via de novo pathway; 5-formamido-1-(5-phospho-D-ribosyl)imidazole-4-carboxamide from 5-amino-1-(5-phospho-D-ribosyl)imidazole-4-carboxamide (formate route): step 1/1. Catalyzes the ATP- and formate-dependent formylation of 5-aminoimidazole-4-carboxamide-1-beta-d-ribofuranosyl 5'-monophosphate (AICAR) to 5-formaminoimidazole-4-carboxamide-1-beta-d-ribofuranosyl 5'-monophosphate (FAICAR) in the absence of folates. This chain is 5-formaminoimidazole-4-carboxamide-1-(beta)-D-ribofuranosyl 5'-monophosphate synthetase, found in Methanococcoides burtonii (strain DSM 6242 / NBRC 107633 / OCM 468 / ACE-M).